The chain runs to 93 residues: Acylphosphatase (93 aa).

The 91-residue stretch at 3–93 (KQQYFISGKV…FQFNNFKIYY (91 aa)) folds into the Acylphosphatase-like domain. Active-site residues include Arg-18 and Asn-36.

This sequence belongs to the acylphosphatase family.

The enzyme catalyses an acyl phosphate + H2O = a carboxylate + phosphate + H(+). The polypeptide is Acylphosphatase (acyP) (Borrelia garinii subsp. bavariensis (strain ATCC BAA-2496 / DSM 23469 / PBi) (Borreliella bavariensis)).